Reading from the N-terminus, the 273-residue chain is Shikimate dehydrogenase (NADP(+)) (273 aa).

Shikimate-binding positions include 15-17 and Thr62; that span reads SKS. The Proton acceptor role is filled by Lys66. Asp78 is an NADP(+) binding site. Positions 87 and 103 each coordinate shikimate. Residues 127-131, 150-155, and Met214 each bind NADP(+); these read GAGGA and NRTYAR. Tyr216 contacts shikimate. Residue Gly238 participates in NADP(+) binding.

This sequence belongs to the shikimate dehydrogenase family. Homodimer.

It catalyses the reaction shikimate + NADP(+) = 3-dehydroshikimate + NADPH + H(+). It participates in metabolic intermediate biosynthesis; chorismate biosynthesis; chorismate from D-erythrose 4-phosphate and phosphoenolpyruvate: step 4/7. Functionally, involved in the biosynthesis of the chorismate, which leads to the biosynthesis of aromatic amino acids. Catalyzes the reversible NADPH linked reduction of 3-dehydroshikimate (DHSA) to yield shikimate (SA). This chain is Shikimate dehydrogenase (NADP(+)), found in Yersinia enterocolitica serotype O:8 / biotype 1B (strain NCTC 13174 / 8081).